The chain runs to 1142 residues: DNA-directed RNA polymerase subunit beta N-terminal section (1142 aa).

This sequence belongs to the RNA polymerase beta chain family. In terms of assembly, in plastids the minimal PEP RNA polymerase catalytic core is composed of four subunits: alpha, beta, beta', and beta''. When a (nuclear-encoded) sigma factor is associated with the core the holoenzyme is formed, which can initiate transcription.

It localises to the plastid. The protein resides in the chloroplast. It carries out the reaction RNA(n) + a ribonucleoside 5'-triphosphate = RNA(n+1) + diphosphate. In terms of biological role, DNA-dependent RNA polymerase catalyzes the transcription of DNA into RNA using the four ribonucleoside triphosphates as substrates. This is DNA-directed RNA polymerase subunit beta N-terminal section (rpoB1) from Pleurastrum terricola (Filamentous green alga).